Here is a 192-residue protein sequence, read N- to C-terminus: Phosphoheptose isomerase (192 aa).

An SIS domain is found at 37 to 192; the sequence is LADSFKAGGK…IQLIEKEMEK (156 aa). Residue 52–54 coordinates substrate; it reads NGG. Residues His-61 and Glu-65 each contribute to the Zn(2+) site. Substrate contacts are provided by residues Glu-65, 93–94, 119–121, Ser-124, and Gln-172; these read ND and STS. Residues Gln-172 and His-180 each contribute to the Zn(2+) site.

The protein belongs to the SIS family. GmhA subfamily. As to quaternary structure, homotetramer. Requires Zn(2+) as cofactor.

It localises to the cytoplasm. The catalysed reaction is 2 D-sedoheptulose 7-phosphate = D-glycero-alpha-D-manno-heptose 7-phosphate + D-glycero-beta-D-manno-heptose 7-phosphate. It functions in the pathway carbohydrate biosynthesis; D-glycero-D-manno-heptose 7-phosphate biosynthesis; D-glycero-alpha-D-manno-heptose 7-phosphate and D-glycero-beta-D-manno-heptose 7-phosphate from sedoheptulose 7-phosphate: step 1/1. Its function is as follows. Catalyzes the isomerization of sedoheptulose 7-phosphate in D-glycero-D-manno-heptose 7-phosphate. The polypeptide is Phosphoheptose isomerase (Proteus mirabilis (strain HI4320)).